A 231-amino-acid chain; its full sequence is Proteasome subunit alpha type-2 (231 aa).

Belongs to the peptidase T1A family. The 26S proteasome consists of a 20S proteasome core and two 19S regulatory subunits. The 20S proteasome core is composed of 28 subunits that are arranged in four stacked rings, resulting in a barrel-shaped structure. The two end rings are each formed by seven alpha subunits, and the two central rings are each formed by seven beta subunits. The catalytic chamber with the active sites is on the inside of the barrel.

It is found in the cytoplasm. It localises to the nucleus. Its function is as follows. The proteasome is a multicatalytic proteinase complex which is characterized by its ability to cleave peptides with Arg, Phe, Tyr, Leu, and Glu adjacent to the leaving group at neutral or slightly basic pH. The proteasome has an ATP-dependent proteolytic activity. In Caenorhabditis elegans, this protein is Proteasome subunit alpha type-2 (pas-2).